The chain runs to 89 residues: MSLDKGTKEEITKKFQLHEKDTGSADVQIAILTEHITELKEHLKRSPKDQNSRLALLKLVGQRRKLLEYLNSTDTERYKNLISRLNLRK.

This sequence belongs to the universal ribosomal protein uS15 family. As to quaternary structure, part of the 30S ribosomal subunit. Forms a bridge to the 50S subunit in the 70S ribosome, contacting the 23S rRNA.

Functionally, one of the primary rRNA binding proteins, it binds directly to 16S rRNA where it helps nucleate assembly of the platform of the 30S subunit by binding and bridging several RNA helices of the 16S rRNA. Its function is as follows. Forms an intersubunit bridge (bridge B4) with the 23S rRNA of the 50S subunit in the ribosome. This is Small ribosomal subunit protein uS15 from Chlamydia abortus (strain DSM 27085 / S26/3) (Chlamydophila abortus).